The sequence spans 154 residues: 6,7-dimethyl-8-ribityllumazine synthase (154 aa).

Residues Phe-15, 47-49, and 71-73 contribute to the 5-amino-6-(D-ribitylamino)uracil site; these read TFD and AVI. 76–77 is a binding site for (2S)-2-hydroxy-3-oxobutyl phosphate; that stretch reads ET. Residue His-79 is the Proton donor of the active site. Residue Leu-104 participates in 5-amino-6-(D-ribitylamino)uracil binding. Residue Arg-119 participates in (2S)-2-hydroxy-3-oxobutyl phosphate binding.

Belongs to the DMRL synthase family.

The catalysed reaction is (2S)-2-hydroxy-3-oxobutyl phosphate + 5-amino-6-(D-ribitylamino)uracil = 6,7-dimethyl-8-(1-D-ribityl)lumazine + phosphate + 2 H2O + H(+). The protein operates within cofactor biosynthesis; riboflavin biosynthesis; riboflavin from 2-hydroxy-3-oxobutyl phosphate and 5-amino-6-(D-ribitylamino)uracil: step 1/2. Its function is as follows. Catalyzes the formation of 6,7-dimethyl-8-ribityllumazine by condensation of 5-amino-6-(D-ribitylamino)uracil with 3,4-dihydroxy-2-butanone 4-phosphate. This is the penultimate step in the biosynthesis of riboflavin. In Saccharolobus solfataricus (strain ATCC 35092 / DSM 1617 / JCM 11322 / P2) (Sulfolobus solfataricus), this protein is 6,7-dimethyl-8-ribityllumazine synthase.